The chain runs to 90 residues: Small ribosomal subunit protein bS18 (90 aa).

Belongs to the bacterial ribosomal protein bS18 family. Part of the 30S ribosomal subunit. Forms a tight heterodimer with protein bS6.

In terms of biological role, binds as a heterodimer with protein bS6 to the central domain of the 16S rRNA, where it helps stabilize the platform of the 30S subunit. The sequence is that of Small ribosomal subunit protein bS18 from Bacteroides fragilis (strain YCH46).